A 534-amino-acid chain; its full sequence is ATP synthase subunit beta 2 (534 aa).

A compositionally biased stretch (polar residues) spans 1–10; that stretch reads MADPQATNGT. The interval 1-30 is disordered; sequence MADPQATNGTGAACAERDASDVGDVSDVGD. 185–192 is a binding site for ATP; it reads GGAGVGKT. Over residues 494–505 the composition is skewed to basic and acidic residues; that stretch reads AAAREADARREA. The disordered stretch occupies residues 494 to 534; that stretch reads AAAREADARREAAAAASGAGPGTTSDPASGSAEPQGARHGR.

This sequence belongs to the ATPase alpha/beta chains family. In terms of assembly, F-type ATPases have 2 components, CF(1) - the catalytic core - and CF(0) - the membrane proton channel. CF(1) has five subunits: alpha(3), beta(3), gamma(1), delta(1), epsilon(1). CF(0) has three main subunits: a(1), b(2) and c(9-12). The alpha and beta chains form an alternating ring which encloses part of the gamma chain. CF(1) is attached to CF(0) by a central stalk formed by the gamma and epsilon chains, while a peripheral stalk is formed by the delta and b chains.

Its subcellular location is the cell inner membrane. The enzyme catalyses ATP + H2O + 4 H(+)(in) = ADP + phosphate + 5 H(+)(out). Its function is as follows. Produces ATP from ADP in the presence of a proton gradient across the membrane. The catalytic sites are hosted primarily by the beta subunits. The sequence is that of ATP synthase subunit beta 2 from Burkholderia pseudomallei (strain 668).